The sequence spans 127 residues: Nuclear transport factor 2 (127 aa).

The NTF2 domain maps to 11–124 (VGKQFVEHYY…FLLINDFFRL (114 aa)).

The protein localises to the cytoplasm. Its subcellular location is the cytosol. It localises to the nucleus outer membrane. It is found in the nucleus. The protein resides in the nuclear pore complex. The protein localises to the nucleus inner membrane. Its subcellular location is the nucleoplasm. Functionally, mediates the import of GDP-bound RAN from the cytoplasm into the nucleus which is essential for the function of RAN in cargo receptor-mediated nucleocytoplasmic transport. Thereby, plays indirectly a more general role in cargo receptor-mediated nucleocytoplasmic transport. Interacts with GDP-bound RAN in the cytosol, recruits it to the nuclear pore complex via its interaction with nucleoporins and promotes its nuclear import. This is Nuclear transport factor 2 from Dictyostelium discoideum (Social amoeba).